Reading from the N-terminus, the 673-residue chain is Armadillo repeat-containing protein 8 (673 aa).

The residue at position 2 (Ala2) is an N-acetylalanine. 14 ARM repeats span residues 51–92, 95–134, 138–176, 178–217, 224–265, 269–309, 313–352, 374–413, 416–455, 458–497, 501–540, 543–585, 588–627, and 634–673; these read NKQK…SLAM, ENNVKSLLDCHIIPALLQGLLSPDLKFIEACLRCLRTIFT, TPEELLYTDATVIPHLMALLSRSRYTQEYICQIFSHCCK, PDHQTILFNHGAVQNIAHLLTSLSYKVRMQALKCFSVLAF, MTLV…YMCR, IRTD…YLIE, ELQRIASITDHLIAMLADYFKYPSSVSAITDIKRLDHDLK, DIRKKIIETENMMDRIVTGLSESSVKVRLAAVRCLHSLSR, QQLRTSFQDHAVWKPLMKVLQNAPDEILVVASSMLCNLLL, SPSKEPILESGAVELLCGLTQSENPALRVNGIWALMNMAF, QKIKADILRSLSTEQLFRLLSDSDLNVLMKTLGLLRNLLS, PHID…NIAD, TAKDLIMTNDDILQKIKYYMGHSHVKLQLAAMFCISNLIW, and QERQDKLRDMGIVDILHKLSQSPDSNLCDKAKMALQQYLA. Residue Ser337 is modified to Phosphoserine. At Ser512 the chain carries Phosphoserine.

As to quaternary structure, identified in the CTLH complex that contains GID4, RANBP9 and/or RANBP10, MKLN1, MAEA, RMND5A (or alternatively its paralog RMND5B), GID8, ARMC8, WDR26 and YPEL5. Within this complex, MAEA, RMND5A (or alternatively its paralog RMND5B), GID8, WDR26, and RANBP9 and/or RANBP10 form the catalytic core, while GID4, MKLN1, ARMC8 and YPEL5 have ancillary roles.

Its subcellular location is the nucleus. It is found in the cytoplasm. Functionally, component of the CTLH E3 ubiquitin-protein ligase complex that selectively accepts ubiquitin from UBE2H and mediates ubiquitination and subsequent proteasomal degradation of the transcription factor HBP1. In Homo sapiens (Human), this protein is Armadillo repeat-containing protein 8 (ARMC8).